The sequence spans 501 residues: Ammonium transporter 1 member 1 (501 aa).

Helical transmembrane passes span Leu8–Gly28, Leu46–Gly66, Val81–Gly101, Phe128–Glu148, Phe152–His172, Phe199–Ile219, Leu243–Phe263, Val333–Cys353, Leu366–Phe386, and Leu419–Ile439. A Phosphothreonine modification is found at Thr460. Phosphoserine is present on residues Ser475, Ser488, Ser490, and Ser492.

The protein belongs to the ammonia transporter channel (TC 1.A.11.2) family. Self interacts. Interacts with the receptor protein kinases CEPR2, At2g28990 and PAM74. In terms of tissue distribution, highly expressed in roots. Expressed in root tips, root hairs, root epidermis, rhizodermis, cortex and pericycle. Expressed in leaves epidermal and mesophyll cells.

It localises to the cell membrane. In terms of biological role, high affinity ammonium transporter probably involved in ammonium uptake from the soil, long-distance transport to the shoots and re-uptake of apoplastic ammonium that derives from photorespiration in shoots. Contributes with AMT1-3 to the overall ammonium uptake capacity in roots under nitrogen-deficiency conditions. The protein is Ammonium transporter 1 member 1 (AMT1-1) of Arabidopsis thaliana (Mouse-ear cress).